Consider the following 156-residue polypeptide: Protein-export protein SecB (156 aa).

This sequence belongs to the SecB family. As to quaternary structure, homotetramer, a dimer of dimers. One homotetramer interacts with 1 SecA dimer.

It is found in the cytoplasm. In terms of biological role, one of the proteins required for the normal export of preproteins out of the cell cytoplasm. It is a molecular chaperone that binds to a subset of precursor proteins, maintaining them in a translocation-competent state. It also specifically binds to its receptor SecA. The chain is Protein-export protein SecB from Desulfotalea psychrophila (strain LSv54 / DSM 12343).